The following is an 807-amino-acid chain: Glycerol-3-phosphate acyltransferase (807 aa).

Positions 308–313 (CHRSHM) match the HXXXXD motif motif.

This sequence belongs to the GPAT/DAPAT family.

Its subcellular location is the cell inner membrane. The enzyme catalyses sn-glycerol 3-phosphate + an acyl-CoA = a 1-acyl-sn-glycero-3-phosphate + CoA. It functions in the pathway phospholipid metabolism; CDP-diacylglycerol biosynthesis; CDP-diacylglycerol from sn-glycerol 3-phosphate: step 1/3. This chain is Glycerol-3-phosphate acyltransferase, found in Shewanella pealeana (strain ATCC 700345 / ANG-SQ1).